The sequence spans 211 residues: Thymidylate kinase (211 aa).

11-18 (GPDGAGKT) contributes to the ATP binding site.

The protein belongs to the thymidylate kinase family.

The enzyme catalyses dTMP + ATP = dTDP + ADP. Functionally, phosphorylation of dTMP to form dTDP in both de novo and salvage pathways of dTTP synthesis. The protein is Thymidylate kinase of Streptococcus pyogenes serotype M18 (strain MGAS8232).